Reading from the N-terminus, the 2353-residue chain is C2 domain-containing protein 3 (2353 aa).

The tract at residues methionine 1–threonine 27 is disordered. Serine 466 carries the post-translational modification Phosphoserine. Disordered regions lie at residues lysine 488–asparagine 508 and glycine 549–proline 568. Residues lysine 496–arginine 507 are compositionally biased toward basic residues. In terms of domain architecture, C2 1 spans aspartate 521–aspartate 678. Residue serine 728 is modified to Phosphoserine. 4 C2 domains span residues serine 787–leucine 919, glutamine 985–aspartate 1147, serine 1171–tyrosine 1339, and glutamate 1403–valine 1533. The segment at histidine 1569–glutamate 1591 is disordered. In terms of domain architecture, C2 6 spans threonine 1617–tyrosine 1745. Residues serine 1822–histidine 1846 are disordered. Residues proline 1830–glutamine 1839 are compositionally biased toward polar residues. Serine 1891 carries the post-translational modification Phosphoserine. Disordered regions lie at residues alanine 1972–arginine 2032, threonine 2084–phenylalanine 2118, leucine 2130–leucine 2269, and proline 2301–proline 2334. Residues proline 2007–threonine 2016 show a composition bias toward basic and acidic residues. Polar residues predominate over residues threonine 2084–isoleucine 2098. Residues serine 2114 and serine 2132 each carry the phosphoserine modification. Polar residues predominate over residues serine 2181–aspartate 2198. A compositionally biased stretch (basic and acidic residues) spans serine 2236–glutamine 2253. A compositionally biased stretch (polar residues) spans arginine 2254–serine 2267.

In terms of assembly, interacts with IFT88, BBS4 and PCM1. Interacts with OFD1; OFD1 may act as a negative regulator of C2CD3. Associates with the BBSome complex.

Its subcellular location is the cytoplasm. The protein localises to the cytoskeleton. It is found in the cilium basal body. The protein resides in the microtubule organizing center. It localises to the centrosome. Its subcellular location is the centriole. Functionally, component of the centrioles that acts as a positive regulator of centriole elongation. Promotes assembly of centriolar distal appendage, a structure at the distal end of the mother centriole that acts as an anchor of the cilium, and is required for recruitment of centriolar distal appendages proteins CEP83, SCLT1, CEP89, FBF1 and CEP164. Not required for centriolar satellite integrity or RAB8 activation. Required for primary cilium formation. Required for sonic hedgehog/SHH signaling and for proteolytic processing of GLI3. The protein is C2 domain-containing protein 3 (C2CD3) of Homo sapiens (Human).